The primary structure comprises 248 residues: Sugar fermentation stimulation protein homolog (248 aa).

The protein belongs to the SfsA family.

This chain is Sugar fermentation stimulation protein homolog, found in Methylorubrum extorquens (strain CM4 / NCIMB 13688) (Methylobacterium extorquens).